Consider the following 506-residue polypeptide: Lysine--tRNA ligase (506 aa).

Glutamate 416 and glutamate 423 together coordinate Mg(2+).

This sequence belongs to the class-II aminoacyl-tRNA synthetase family. Homodimer. Mg(2+) serves as cofactor.

It localises to the cytoplasm. The catalysed reaction is tRNA(Lys) + L-lysine + ATP = L-lysyl-tRNA(Lys) + AMP + diphosphate. The protein is Lysine--tRNA ligase of Bordetella bronchiseptica (strain ATCC BAA-588 / NCTC 13252 / RB50) (Alcaligenes bronchisepticus).